A 248-amino-acid chain; its full sequence is ATP synthase subunit a, chloroplastic (248 aa).

5 consecutive transmembrane segments (helical) span residues 38–58 (QVLI…AIAV), 96–116 (VPFI…GALL), 135–155 (INTT…AGLT), 200–220 (LVVV…VMFL), and 221–241 (GLFT…AYIG).

This sequence belongs to the ATPase A chain family. F-type ATPases have 2 components, CF(1) - the catalytic core - and CF(0) - the membrane proton channel. CF(1) has five subunits: alpha(3), beta(3), gamma(1), delta(1), epsilon(1). CF(0) has four main subunits: a, b, b' and c.

The protein resides in the plastid. The protein localises to the chloroplast thylakoid membrane. Its function is as follows. Key component of the proton channel; it plays a direct role in the translocation of protons across the membrane. The protein is ATP synthase subunit a, chloroplastic of Nymphaea alba (White water-lily).